The primary structure comprises 348 residues: Fructose-1,6-bisphosphatase class 1 (348 aa).

Mg(2+)-binding residues include glutamate 107, aspartate 129, isoleucine 131, and aspartate 132. Substrate is bound by residues 132–135, asparagine 224, tyrosine 252, and lysine 282; that span reads DGSS. Glutamate 288 is a binding site for Mg(2+).

It belongs to the FBPase class 1 family. In terms of assembly, homotetramer. It depends on Mg(2+) as a cofactor.

Its subcellular location is the cytoplasm. The enzyme catalyses beta-D-fructose 1,6-bisphosphate + H2O = beta-D-fructose 6-phosphate + phosphate. It participates in carbohydrate biosynthesis; Calvin cycle. The protein is Fructose-1,6-bisphosphatase class 1 of Microcystis aeruginosa (strain NIES-843 / IAM M-2473).